A 529-amino-acid polypeptide reads, in one-letter code: Cytochrome P450 monooxygenase okaD (529 aa).

A helical transmembrane segment spans residues 13–35 (LPAQHLLASLALVGALLSVGYLL). Cys435 provides a ligand contact to heme.

Belongs to the cytochrome P450 family. The cofactor is heme.

The protein localises to the membrane. The enzyme catalyses okaramine C + 2 reduced [NADPH--hemoprotein reductase] + 2 O2 = okaramine A + 2 oxidized [NADPH--hemoprotein reductase] + 4 H2O + 2 H(+). Its pathway is alkaloid biosynthesis. Functionally, cytochrome P450 monooxygenase; part of the gene cluster that mediates the biosynthesis of okaramine B, a prenylated indole alkaloid that possesses an unusual octacyclic ring system, including a four-membered azetidine ring and an eight-membered azocine ring, and that exhibits insecticidal activity against silkworm larvae. Within the pathway, okaD likely catalyzes a key step in forming the eight-membered ring of okaramine A using as substrate okaramine C. The biosynthesis begins with the NRPS okaA that condenses two tryptophan molecules into cyclo(L-Trp-L-Trp). Prenylation by the prenyltransferase okaC then leads to the formation of cyclo(N8-(alpha,alpha-dimethylallyl)-L-Trp-6a-(alpha,alpha-dime-thylallyl)-L-Trp). This is followed by indole 2,3-epoxidation by the FAD-dependent monooxygenase okaB to facilitate the formation of the hexahydropyrrolo[2,3-b]indole (HPI) moiety of okaramine C. The cytochrome P450 monooxygenase okaD then likely catalyzes formation of the eight-membered ring of okaramine A. The dioxygenase okaE further forms the unusual 2-dimethyl-3-methyl-azetidine ring to yield 12-deshydroxyl okaramine E, as well as the hydroxylation of 12-deshydroxyl okaramine E to produce okaramine E. The cytochrome P450 monoxygenase okaG converts 12-deshydroxyl okaramine E into 3-desmethyl okaramine B which is further methylated by the methyltransferase okaF into okaramine B. In a shunt pathway, okaG and okaF together are also able to convert okaramine E into okaramine D. Okaramine H is produced by nonenzymatic conversion from okaramine A. This Penicillium ochrochloron protein is Cytochrome P450 monooxygenase okaD.